The chain runs to 308 residues: Mitochondrial import receptor subunit TOM40B (308 aa).

Residues 281 to 308 (PLPVTLALGAFLNHWRNRFHCGFSITVG) are required for mitochondrial targeting.

It belongs to the Tom40 family. In terms of assembly, forms part of the preprotein translocase of the outer mitochondrial membrane (TOM complex) containing TOMM22, TOMM40, TOMM40L and TOMM70. Interacts with mitochondrial targeting sequences. Widely expressed. Higher levels in heart, brain and liver, very low level in testis.

It localises to the mitochondrion outer membrane. Its function is as follows. Potential channel-forming protein implicated in import of protein precursors into mitochondria. The polypeptide is Mitochondrial import receptor subunit TOM40B (Rattus norvegicus (Rat)).